The sequence spans 238 residues: Orotidine 5'-phosphate decarboxylase (238 aa).

Substrate-binding positions include aspartate 18, lysine 40, 67 to 76 (DMKLLDIDNT), threonine 122, arginine 183, glutamine 192, and arginine 213. Lysine 69 (proton donor) is an active-site residue.

The protein belongs to the OMP decarboxylase family. Type 1 subfamily. Homodimer.

It catalyses the reaction orotidine 5'-phosphate + H(+) = UMP + CO2. It participates in pyrimidine metabolism; UMP biosynthesis via de novo pathway; UMP from orotate: step 2/2. In terms of biological role, catalyzes the decarboxylation of orotidine 5'-monophosphate (OMP) to uridine 5'-monophosphate (UMP). The chain is Orotidine 5'-phosphate decarboxylase from Brucella abortus (strain S19).